Consider the following 117-residue polypeptide: Large ribosomal subunit protein bL20 (117 aa).

This sequence belongs to the bacterial ribosomal protein bL20 family.

Binds directly to 23S ribosomal RNA and is necessary for the in vitro assembly process of the 50S ribosomal subunit. It is not involved in the protein synthesizing functions of that subunit. In Citrifermentans bemidjiense (strain ATCC BAA-1014 / DSM 16622 / JCM 12645 / Bem) (Geobacter bemidjiensis), this protein is Large ribosomal subunit protein bL20.